A 356-amino-acid chain; its full sequence is tRNA N6-adenosine threonylcarbamoyltransferase (356 aa).

The Fe cation site is built by His-115 and His-119. Substrate-binding positions include 138 to 142 (LVSGG), Asp-171, Gly-184, and Asn-283. Residue Asp-311 participates in Fe cation binding.

It belongs to the KAE1 / TsaD family. Fe(2+) is required as a cofactor.

It localises to the cytoplasm. It carries out the reaction L-threonylcarbamoyladenylate + adenosine(37) in tRNA = N(6)-L-threonylcarbamoyladenosine(37) in tRNA + AMP + H(+). Its function is as follows. Required for the formation of a threonylcarbamoyl group on adenosine at position 37 (t(6)A37) in tRNAs that read codons beginning with adenine. Is involved in the transfer of the threonylcarbamoyl moiety of threonylcarbamoyl-AMP (TC-AMP) to the N6 group of A37, together with TsaE and TsaB. TsaD likely plays a direct catalytic role in this reaction. This is tRNA N6-adenosine threonylcarbamoyltransferase from Prochlorococcus marinus (strain MIT 9313).